The sequence spans 129 residues: Small ribosomal subunit protein uS11 (129 aa).

Belongs to the universal ribosomal protein uS11 family. As to quaternary structure, part of the 30S ribosomal subunit. Interacts with proteins S7 and S18. Binds to IF-3.

Its function is as follows. Located on the platform of the 30S subunit, it bridges several disparate RNA helices of the 16S rRNA. Forms part of the Shine-Dalgarno cleft in the 70S ribosome. This is Small ribosomal subunit protein uS11 from Methylorubrum populi (strain ATCC BAA-705 / NCIMB 13946 / BJ001) (Methylobacterium populi).